A 565-amino-acid chain; its full sequence is CTP synthase (565 aa).

Residues 1-272 (MARPKNVKHI…DLRVLKKLGL (272 aa)) are amidoligase domain. Ser18 contacts CTP. Ser18 contributes to the UTP binding site. Position 19-24 (19-24 (SLGKGI)) interacts with ATP. Tyr59 contributes to the L-glutamine binding site. Asp76 serves as a coordination point for ATP. Mg(2+)-binding residues include Asp76 and Glu146. CTP contacts are provided by residues 153–155 (DIE), 193–198 (KTKPTQ), and Lys229. UTP-binding positions include 193 to 198 (KTKPTQ) and Lys229. The Glutamine amidotransferase type-1 domain occupies 299-543 (TIGICGKYTE…VAAAKEYAHG (245 aa)). Gly363 is an L-glutamine binding site. Cys390 acts as the Nucleophile; for glutamine hydrolysis in catalysis. L-glutamine is bound by residues 391–394 (LGMQ), Glu414, and Arg471. Catalysis depends on residues His516 and Glu518.

It belongs to the CTP synthase family. As to quaternary structure, homotetramer.

It carries out the reaction UTP + L-glutamine + ATP + H2O = CTP + L-glutamate + ADP + phosphate + 2 H(+). The catalysed reaction is L-glutamine + H2O = L-glutamate + NH4(+). It catalyses the reaction UTP + NH4(+) + ATP = CTP + ADP + phosphate + 2 H(+). It functions in the pathway pyrimidine metabolism; CTP biosynthesis via de novo pathway; CTP from UDP: step 2/2. Its activity is regulated as follows. Allosterically activated by GTP, when glutamine is the substrate; GTP has no effect on the reaction when ammonia is the substrate. The allosteric effector GTP functions by stabilizing the protein conformation that binds the tetrahedral intermediate(s) formed during glutamine hydrolysis. Inhibited by the product CTP, via allosteric rather than competitive inhibition. Catalyzes the ATP-dependent amination of UTP to CTP with either L-glutamine or ammonia as the source of nitrogen. Regulates intracellular CTP levels through interactions with the four ribonucleotide triphosphates. The polypeptide is CTP synthase (Pelodictyon phaeoclathratiforme (strain DSM 5477 / BU-1)).